A 224-amino-acid chain; its full sequence is uncharacterized protein (224 aa).

4 helical membrane-spanning segments follow: residues 39-59, 70-90, 103-123, and 139-159; these read LICL…FYSI, YLSL…ILFA, VFVF…IGAI, and MHIG…FLIT.

Its subcellular location is the membrane. This is an uncharacterized protein from Dictyostelium discoideum (Social amoeba).